Here is a 303-residue protein sequence, read N- to C-terminus: Zinc transporter ZIP9 (303 aa).

The chain crosses the membrane as a helical span at residues 7 to 27 (ISLLSLAMLVGCYVSGIIPLA). An N-linked (GlcNAc...) asparagine glycan is attached at Asn-29. The next 5 helical transmembrane spans lie at 35–55 (LKLV…AVIV), 102–122 (AYIG…DQIG), 142–162 (ITTT…LGAA), 172–192 (LIVF…LVSF), and 206–226 (HLLV…LGLS). Asn-237 carries N-linked (GlcNAc...) asparagine glycosylation. Transmembrane regions (helical) follow at residues 240-260 (GVAM…HVLP) and 282-302 (LEVC…IGHQ).

The protein belongs to the ZIP transporter (TC 2.A.5) family.

It localises to the golgi apparatus. The protein localises to the trans-Golgi network membrane. The protein resides in the cell membrane. It is found in the cytoplasm. Its subcellular location is the perinuclear region. It localises to the mitochondrion. The protein localises to the nucleus. It carries out the reaction Zn(2+)(in) = Zn(2+)(out). Its function is as follows. Transports zinc ions across cell and organelle membranes into the cytoplasm and regulates intracellular zinc homeostasis. Participates in the zinc ions efflux out of the secretory compartments. Also functions as a membrane androgen receptor that mediates, through a G protein, the non-classical androgen signaling pathway, characterized by the activation of MAPK3/MAPK1 (Erk1/2) and transcription factors CREB1 or ATF1. Moreover, has dual functions as a membrane-bound androgen receptor and as an androgen-dependent zinc transporter both of which are mediated through an inhibitory G protein (Gi) that mediates both MAP kinase and zinc signaling leading to the androgen-dependent apoptotic process. The polypeptide is Zinc transporter ZIP9 (Xenopus tropicalis (Western clawed frog)).